The sequence spans 470 residues: Glutamate--tRNA ligase 2 (470 aa).

A 'HIGH' region motif is present at residues 10-20; that stretch reads PSPTGFLHIGS. Residues 239-243 carry the 'KMSKS' region motif; the sequence is KLSKR. Lysine 242 lines the ATP pocket.

This sequence belongs to the class-I aminoacyl-tRNA synthetase family. Glutamate--tRNA ligase type 1 subfamily. Monomer.

It localises to the cytoplasm. It carries out the reaction tRNA(Glu) + L-glutamate + ATP = L-glutamyl-tRNA(Glu) + AMP + diphosphate. Functionally, catalyzes the attachment of glutamate to tRNA(Glu) in a two-step reaction: glutamate is first activated by ATP to form Glu-AMP and then transferred to the acceptor end of tRNA(Glu). This is Glutamate--tRNA ligase 2 from Rickettsia prowazekii (strain Madrid E).